Consider the following 165-residue polypeptide: Ribosome maturation factor RimM (165 aa).

Residues 92–163 enclose the PRC barrel domain; sequence EARHYWADLE…RVVVDPPEGL (72 aa).

This sequence belongs to the RimM family. As to quaternary structure, binds ribosomal protein uS19.

The protein localises to the cytoplasm. In terms of biological role, an accessory protein needed during the final step in the assembly of 30S ribosomal subunit, possibly for assembly of the head region. Essential for efficient processing of 16S rRNA. May be needed both before and after RbfA during the maturation of 16S rRNA. It has affinity for free ribosomal 30S subunits but not for 70S ribosomes. This chain is Ribosome maturation factor RimM, found in Anaeromyxobacter sp. (strain Fw109-5).